A 305-amino-acid chain; its full sequence is Methionyl-tRNA formyltransferase (305 aa).

Residue 111 to 114 (SLLP) coordinates (6S)-5,6,7,8-tetrahydrofolate.

It belongs to the Fmt family.

The enzyme catalyses L-methionyl-tRNA(fMet) + (6R)-10-formyltetrahydrofolate = N-formyl-L-methionyl-tRNA(fMet) + (6S)-5,6,7,8-tetrahydrofolate + H(+). Attaches a formyl group to the free amino group of methionyl-tRNA(fMet). The formyl group appears to play a dual role in the initiator identity of N-formylmethionyl-tRNA by promoting its recognition by IF2 and preventing the misappropriation of this tRNA by the elongation apparatus. The protein is Methionyl-tRNA formyltransferase of Campylobacter jejuni subsp. jejuni serotype O:23/36 (strain 81-176).